We begin with the raw amino-acid sequence, 165 residues long: Endoribonuclease YbeY (165 aa).

Residues histidine 130, histidine 134, and histidine 140 each contribute to the Zn(2+) site.

The protein belongs to the endoribonuclease YbeY family. It depends on Zn(2+) as a cofactor.

It is found in the cytoplasm. Its function is as follows. Single strand-specific metallo-endoribonuclease involved in late-stage 70S ribosome quality control and in maturation of the 3' terminus of the 16S rRNA. The polypeptide is Endoribonuclease YbeY (Streptococcus gordonii (strain Challis / ATCC 35105 / BCRC 15272 / CH1 / DL1 / V288)).